The chain runs to 164 residues: Anterior gradient protein 3 (164 aa).

The first 19 residues, 1–19 (MYFPMIELTLVLLASSNLA), serve as a signal peptide directing secretion. The short motif at 161 to 164 (QTEL) is the Prevents secretion from ER element.

It belongs to the AGR family.

The protein resides in the endoplasmic reticulum. It is found in the cytoplasm. In terms of biological role, required for calcium-mediated regulation of ciliary beat frequency in the airway. The polypeptide is Anterior gradient protein 3 (Xenopus tropicalis (Western clawed frog)).